Consider the following 126-residue polypeptide: Large-conductance mechanosensitive channel (126 aa).

2 consecutive transmembrane segments (helical) span residues 8 to 28 (FAMR…AAFT) and 70 to 90 (IQQI…VKVI).

This sequence belongs to the MscL family. Homopentamer.

It is found in the cell membrane. Its function is as follows. Channel that opens in response to stretch forces in the membrane lipid bilayer. May participate in the regulation of osmotic pressure changes within the cell. The chain is Large-conductance mechanosensitive channel from Exiguobacterium sp. (strain ATCC BAA-1283 / AT1b).